The chain runs to 420 residues: Histidine--tRNA ligase (420 aa).

It belongs to the class-II aminoacyl-tRNA synthetase family. Homodimer.

The protein localises to the cytoplasm. The catalysed reaction is tRNA(His) + L-histidine + ATP = L-histidyl-tRNA(His) + AMP + diphosphate + H(+). This Staphylococcus aureus (strain Mu3 / ATCC 700698) protein is Histidine--tRNA ligase.